Reading from the N-terminus, the 624-residue chain is Kelch-like ECH-associated protein 1 (624 aa).

C38 carries the S-(2-succinyl)cysteine modification. Positions 77–149 (CDVTLQVKYQ…AYTASISMGE (73 aa)) constitute a BTB domain. R135 is covalently cross-linked (N5-[4-(S-L-cysteinyl)-5-methyl-1H-imidazol-2-yl]-L-ornithine (Arg-Cys) (interchain with C-151 in KEAP1)). C151 carries the post-translational modification S-(2,3-dicarboxypropyl)cysteine; alternate. The residue at position 151 (C151) is an S-(2-succinyl)cysteine; alternate. S-nitrosocysteine; alternate is present on C151. C151 participates in a covalent cross-link: N5-[4-(S-L-cysteinyl)-5-methyl-1H-imidazol-2-yl]-L-ornithine (Cys-Arg) (interchain with R-135 in KEAP1). The 103-residue stretch at 184 to 286 (AIGIANFAEQ…TPNFLQMQLQ (103 aa)) folds into the BACK domain. An S-(2-succinyl)cysteine modification is found at C241. Residues C257 and C273 each carry the S-(2,3-dicarboxypropyl)cysteine modification. Position 288 is an S-(2,3-dicarboxypropyl)cysteine; alternate (C288). At C288 the chain carries S-(2-succinyl)cysteine; alternate. S-(2-succinyl)cysteine is present on C319. Kelch repeat units lie at residues 327 to 372 (LIYT…VVGG), 373 to 423 (LLYA…VIDG), 424 to 470 (HIYA…VLNR), 471 to 517 (LLYA…VLHN), 518 to 564 (CIYA…VHQG), and 565 to 611 (RIYV…VTME). C434 is modified (S-cGMP-cysteine). C613 carries the post-translational modification S-(2-succinyl)cysteine.

The protein belongs to the KEAP1 family. As to quaternary structure, component of the BCR(KEAP1) E3 ubiquitin ligase complex, at least composed of 2 molecules of CUL3, 2 molecules of KEAP1, and RBX1. Interacts with NFE2L2/NRF2; the interaction is direct. Forms a ternary complex with NFE2L2/NRF2 and PGAM5. Interacts with (phosphorylated) SQSTM1/p62; the interaction is direct and inactivates the BCR(KEAP1) complex by sequestering it in inclusion bodies, promoting its degradation. Interacts with NFE2L1. Interacts with BPTF and PTMA. Interacts with MAP1LC3B. Interacts indirectly with ENC1. Interacts with SESN1 and SESN2. Interacts with HSP90AA1 and HSP90AB1. Interacts with PGCKA1; this interaction prevents the ubiquitination of KEAP1 by TRIM25, thus protecting KEAP1 from degradation. (Microbial infection) Interacts with ebolavirus protein VP24; this interaction activates transcription factor NFE2L2/NRF2 by blocking its interaction with KEAP1. Non-enzymatic covalent modifications of reactive cysteines by electrophile metabolites inactivate the BCR(KEAP1) complex. Accumulation of fumarate promotes the formation of cysteine S-succination (S-(2-succinyl)cysteine), leading to inactivate the BCR(KEAP1) complex and promote NFE2L2/NRF2 nuclear accumulation and activation. Nitric oxide-dependent 8-Nitro-cGMP formation promotes cysteine guanylation (S-cGMP-cysteine), leading to NFE2L2/NRF2 nuclear accumulation and activation. Itaconate, an anti-inflammatory metabolite generated in response to lipopolysaccharide, alkylates cysteines, activating NFE2L2/NRF2. Methylglyoxal, a reactive metabolite that accumulates when the glycolytic enzyme PGK1 is inhibited, promotes formation of a methylimidazole cross-link between proximal Cys-151 and Arg-135 on another KEAP1 molecule, resulting in an inactive dimer that inactivates the BCR(KEAP1) complex. Post-translationally, degraded via a proteasomal-independent process during selective autophagy: interaction with phosphorylated SQSTM1/p62 sequesters KEAP1 in inclusion bodies, leading to its degradation. In terms of processing, auto-ubiquitinated by the BCR(KEAP1) complex. Quinone-induced oxidative stress, but not sulforaphane, increases its ubiquitination. Ubiquitination and subsequent degradation is most pronounced following prolonged exposure of cells to oxidative stress, particularly in glutathione-deficient cells that are highly susceptible to oxidative stress. Deubiquitinated by USP25; leading to stabilization. Ubiquitinated by TRIM25; leading to degradation upon ER stress. Broadly expressed, with highest levels in skeletal muscle.

The protein resides in the cytoplasm. It localises to the nucleus. Its pathway is protein modification; protein ubiquitination. Ubiquitin ligase activity of the BCR(KEAP1) complex is inhibited by oxidative stress and electrophile metabolites such as sulforaphane. Electrophile metabolites react with reactive cysteine residues in KEAP1 and trigger non-enzymatic covalent modifications of these cysteine residues, leading to inactivate the ubiquitin ligase activity of the BCR(KEAP1) complex. Selective autophagy also inactivates the BCR(KEAP1) complex via interaction between KEAP1 and SQSTM1/p62, which sequesters the complex in inclusion bodies and promotes its degradation. Its function is as follows. Substrate-specific adapter of a BCR (BTB-CUL3-RBX1) E3 ubiquitin ligase complex that regulates the response to oxidative stress by targeting NFE2L2/NRF2 for ubiquitination. KEAP1 acts as a key sensor of oxidative and electrophilic stress: in normal conditions, the BCR(KEAP1) complex mediates ubiquitination and degradation of NFE2L2/NRF2, a transcription factor regulating expression of many cytoprotective genes. In response to oxidative stress, different electrophile metabolites trigger non-enzymatic covalent modifications of highly reactive cysteine residues in KEAP1, leading to inactivate the ubiquitin ligase activity of the BCR(KEAP1) complex, promoting NFE2L2/NRF2 nuclear accumulation and expression of phase II detoxifying enzymes. In response to selective autophagy, KEAP1 is sequestered in inclusion bodies following its interaction with SQSTM1/p62, leading to inactivation of the BCR(KEAP1) complex and activation of NFE2L2/NRF2. The BCR(KEAP1) complex also mediates ubiquitination of SQSTM1/p62, increasing SQSTM1/p62 sequestering activity and degradation. The BCR(KEAP1) complex also targets BPTF and PGAM5 for ubiquitination and degradation by the proteasome. This Homo sapiens (Human) protein is Kelch-like ECH-associated protein 1.